We begin with the raw amino-acid sequence, 374 residues long: 2-oxoglutarate-Fe(II) type oxidoreductase ppzC (374 aa).

A disordered region spans residues 111 to 131 (KKGPFDSGYRGPGTQRVNPDE). Residues 220-330 (YPDASLEINF…RVSMPFFWGF (111 aa)) enclose the Fe2OG dioxygenase domain. Fe cation-binding residues include histidine 254, aspartate 256, and histidine 311. Residue arginine 321 coordinates 2-oxoglutarate.

This sequence belongs to the iron/ascorbate-dependent oxidoreductase family. It depends on Fe(2+) as a cofactor.

It carries out the reaction peramine + 2-oxoglutarate + O2 = 8-hydroxyperamine + succinate + CO2. The protein operates within secondary metabolite biosynthesis. Its function is as follows. 2-oxoglutarate-Fe(II) type oxidoreductase; part of the gene cluster that mediates the biosynthesis of pyrrolopyrazines, secondary metabolites showing insecticidal activity. Within the pathway, ppzC uses peramine as substrate for hydroxylation to yield the novel analog 8-hydroxyperamine. The single multifunctional NRPS ppzA is sufficient to produce peramine via condensation of 1-pyrroline-5-carboxylate and arginine, N-methylation of the alpha-amino group of arginine and reduction of the thioester and the cyclization to form an iminium ion resulting in release from the peptide synthetase. Deprotonation of this intermediate and oxidation of the pyrroline ring would give rise to peramine. In Epichloe species that produce only peramine, the peramine synthetase gene is not localized in a gene cluster, in contrast to Metarhizium species that contain additional pyrrolopyrazine biosynthesis genes. The 2-oxoglutarate-Fe(II) type oxidoreductase ppzC hydroxylates peramine to yield the newly identified compound 8-hydroxyperamine whereas ppzD converts L-proline into trans-4-hydroxy-L-proline, a precursor of peramine biosynthesis. The sequence is that of 2-oxoglutarate-Fe(II) type oxidoreductase ppzC (ppzC) from Metarhizium majus (strain ARSEF 297).